The chain runs to 53 residues: Sodium/potassium-transporting ATPase subunit gamma (53 aa).

The helical transmembrane segment at 16–34 threads the bilayer; sequence GGLIFAALAFIVGLVIILS.

This sequence belongs to the FXYD family. In terms of assembly, regulatory subunit of the sodium/potassium-transporting ATPase which is composed of a catalytic alpha subunit, an auxiliary non-catalytic beta subunit and an additional regulatory subunit. In terms of processing, the N-terminus is blocked. Highest levels expressed in the kidney and spleen. Restricted to the basolateral membrane in renal epithelial cells and varies in its level of expression along the nephron.

It localises to the membrane. May be involved in forming the receptor site for cardiac glycoside binding or may modulate the transport function of the sodium ATPase. The sequence is that of Sodium/potassium-transporting ATPase subunit gamma (FXYD2) from Ovis aries (Sheep).